The sequence spans 238 residues: Protein TIFY 3A (238 aa).

In terms of domain architecture, Tify 1 spans 39-74 (EPDASTQLTIIFGGSCRVFNGVPAQKVQEIIRIAFA). The Jas 1 signature appears at 101 to 120 (PIARRRSLQRFLEKRRDRST). A Nuclear localization signal 1 motif is present at residues 103–110 (ARRRSLQR). The Tify 2 domain maps to 125–160 (SMILPSQLTIIFGGSFSVFDGIPAEKVQEILHIAAA). The short motif at 197 to 222 (PIARRRSLQRFFEKRRHRFVHTKPYS) is the Jas 2 element. Positions 199-206 (ARRRSLQR) match the Nuclear localization signal 2 motif. The interval 219–238 (KPYSATTSEADKNETSPIVT) is disordered.

It belongs to the TIFY/JAZ family. As to quaternary structure, interacts with MYC2, MYB21, MYB24, AFPH2/NINJA, TIFY10A/JAZ1, TIFY10B/JAZ2, TIFY6B/JAZ3, TIFY6A/JAZ4, TIFY7/JAZ9 and TIFY9/JAZ10. Post-translationally, ubiquitinated. Targeted for degradation by the SCF(COI1) E3 ubiquitin ligase-proteasome pathway during jasmonate signaling.

The protein localises to the nucleus. In terms of biological role, repressor of jasmonate (JA) responses. Targets MYC2, MYC3 and MYC4 that are JA-dependent transcription activators. This Arabidopsis thaliana (Mouse-ear cress) protein is Protein TIFY 3A (TIFY3A).